Here is a 755-residue protein sequence, read N- to C-terminus: Oligopeptide transporter 1 (755 aa).

13 helical membrane passes run 58 to 78 (TWTL…FFGF), 82 to 102 (QLWV…KLMA), 134 to 154 (ITIF…ITIV), 165 to 185 (AAAM…AGIF), 226 to 246 (FFII…YLFP), 298 to 318 (FFAI…VLPI), 370 to 390 (YLSV…CATI), 434 to 454 (WWFI…CEGF), 462 to 482 (WWGL…IGVI), 546 to 566 (FIVQ…TTWW), 614 to 634 (GIYP…VPFW), 664 to 684 (AKAV…YYIF), and 697 to 717 (ILSA…FFAF).

The protein belongs to the oligopeptide OPT transporter (TC 2.A.67.1) family. As to expression, highly expressed in flowers, and moderately expressed in leaves and stems.

It is found in the membrane. Its function is as follows. Involved in the translocation of tetra- and pentapeptides across the cellular membrane in an energy-dependent manner. The sequence is that of Oligopeptide transporter 1 (OPT1) from Arabidopsis thaliana (Mouse-ear cress).